Consider the following 252-residue polypeptide: Chitooligosaccharide deacetylase (252 aa).

Positions 61 and 125 each coordinate Mg(2+).

Belongs to the YdjC deacetylase family. ChbG subfamily. As to quaternary structure, homodimer. Requires Mg(2+) as cofactor.

The protein resides in the cytoplasm. It carries out the reaction N,N'-diacetylchitobiose + H2O = N-acetyl-beta-D-glucosaminyl-(1-&gt;4)-D-glucosamine + acetate. It catalyses the reaction diacetylchitobiose-6'-phosphate + H2O = N'-monoacetylchitobiose-6'-phosphate + acetate. The protein operates within glycan degradation; chitin degradation. In terms of biological role, involved in the degradation of chitin. ChbG is essential for growth on the acetylated chitooligosaccharides chitobiose and chitotriose but is dispensable for growth on cellobiose and chitosan dimer, the deacetylated form of chitobiose. Deacetylation of chitobiose-6-P and chitotriose-6-P is necessary for both the activation of the chb promoter by the regulatory protein ChbR and the hydrolysis of phosphorylated beta-glucosides by the phospho-beta-glucosidase ChbF. Catalyzes the removal of only one acetyl group from chitobiose-6-P to yield monoacetylchitobiose-6-P, the inducer of ChbR and the substrate of ChbF. This Salmonella paratyphi C (strain RKS4594) protein is Chitooligosaccharide deacetylase.